Reading from the N-terminus, the 260-residue chain is 14-3-3 protein 3 (260 aa).

The protein belongs to the 14-3-3 family. As to quaternary structure, homodimer.

The chain is 14-3-3 protein 3 (TFT3) from Solanum lycopersicum (Tomato).